We begin with the raw amino-acid sequence, 160 residues long: Putative NrdI-like protein (160 aa).

The protein belongs to the NrdI family.

The polypeptide is Putative NrdI-like protein (Streptococcus pyogenes serotype M1).